A 219-amino-acid polypeptide reads, in one-letter code: MSETAPAAPAAPAPAEKTPVKKKARKAAGGAKRKTSGPPVSELITKAVAASKERSGVSLAALKKALAAAGYDVEKNNSRIKLGLKSLVSKGTLVQTKGTGASGSFKLNKKAASGEAKPKAKRAGAAKAKKPAGAAKKPKKAAGTATAKKSTKKTPKKAKKPAAAAGAKKAKSPKKAKATKAKKAPKSPAKAKTVKPKAAKPKTSKPKAAKPKKTAAKKK.

Over residues methionine 1–alanine 15 the composition is skewed to low complexity. The interval methionine 1–serine 41 is disordered. Serine 2 carries the N-acetylserine modification. A Phosphoserine modification is found at serine 2. Lysine 17 carries the N6-acetyllysine modification. A Phosphothreonine modification is found at threonine 18. The segment covering valine 20–threonine 35 has biased composition (basic residues). Lysine 26 carries the post-translational modification N6-acetyllysine; alternate. Lysine 26 carries the N6-methyllysine; alternate modification. Position 34 is an N6-(beta-hydroxybutyryl)lysine; alternate (lysine 34). Lysine 34 bears the N6-succinyllysine; alternate mark. Phosphoserine is present on serine 36. One can recognise an H15 domain in the interval serine 36–lysine 109. Lysine 52 carries the post-translational modification N6-(beta-hydroxybutyryl)lysine. Residue arginine 54 is modified to Citrulline. Residues lysine 64, lysine 85, lysine 90, and lysine 106 each carry the N6-(beta-hydroxybutyryl)lysine modification. Positions threonine 92–lysine 219 are disordered. The segment covering lysine 119–lysine 140 has biased composition (basic residues). Threonine 146 carries the post-translational modification Phosphothreonine. Basic residues-rich tracts occupy residues lysine 149 to lysine 160 and lysine 168 to proline 185. Residue serine 150 is modified to ADP-ribosylserine. Position 187 is a phosphoserine (serine 187). A compositionally biased stretch (basic residues) spans lysine 192–lysine 219.

It belongs to the histone H1/H5 family. Citrullination at Arg-54 (H1R54ci) by PADI4 takes place within the DNA-binding site of H1 and results in its displacement from chromatin and global chromatin decondensation, thereby promoting pluripotency and stem cell maintenance. Post-translationally, ADP-ribosylated on Ser-55, Ser-113 and Ser-150 in response to DNA damage. In terms of processing, H1 histones are progressively phosphorylated during the cell cycle, becoming maximally phosphorylated during late G2 phase and M phase, and being dephosphorylated sharply thereafter. Acetylated at Lys-26. Deacetylated at Lys-26 by SIRT1. Post-translationally, hydroxybutyrylation of histones is induced by starvation.

It is found in the nucleus. It localises to the chromosome. Histone H1 protein binds to linker DNA between nucleosomes forming the macromolecular structure known as the chromatin fiber. Histones H1 are necessary for the condensation of nucleosome chains into higher-order structured fibers. Also acts as a regulator of individual gene transcription through chromatin remodeling, nucleosome spacing and DNA methylation. The chain is Histone H1.4 from Mus musculus (Mouse).